We begin with the raw amino-acid sequence, 104 residues long: Replication restart protein PriB (104 aa).

The 101-residue stretch at 1–101 (MTNRLVLSGT…LHAEQIELID (101 aa)) folds into the SSB domain.

This sequence belongs to the PriB family. As to quaternary structure, homodimer. Interacts with PriA and DnaT. Component of the replication restart primosome. Primosome assembly occurs via a 'hand-off' mechanism. PriA binds to replication forks, subsequently PriB then DnaT bind; DnaT then displaces ssDNA to generate the helicase loading substrate.

Functionally, involved in the restart of stalled replication forks, which reloads the replicative helicase on sites other than the origin of replication; the PriA-PriB pathway is the major replication restart pathway. During primosome assembly it facilitates complex formation between PriA and DnaT on DNA; stabilizes PriA on DNA. Stimulates the DNA unwinding activity of PriA helicase. The sequence is that of Replication restart protein PriB from Shigella dysenteriae serotype 1 (strain Sd197).